The chain runs to 377 residues: Required for respiratory growth protein 1, mitochondrial (377 aa).

The protein belongs to the RRG1 family.

Its subcellular location is the mitochondrion. Essential for respiratory growth and required for mitochondrial protein synthesis. Required for vacuolar acidification. The polypeptide is Required for respiratory growth protein 1, mitochondrial (RRG1) (Candida glabrata (strain ATCC 2001 / BCRC 20586 / JCM 3761 / NBRC 0622 / NRRL Y-65 / CBS 138) (Yeast)).